A 293-amino-acid polypeptide reads, in one-letter code: Pyridoxal 5'-phosphate synthase subunit PdxS (293 aa).

Asp25 is a binding site for D-ribose 5-phosphate. The active-site Schiff-base intermediate with D-ribose 5-phosphate is Lys82. Gly154 is a D-ribose 5-phosphate binding site. A D-glyceraldehyde 3-phosphate-binding site is contributed by Arg166. D-ribose 5-phosphate contacts are provided by residues Gly215 and 236 to 237 (GS).

It belongs to the PdxS/SNZ family. In terms of assembly, in the presence of PdxT, forms a dodecamer of heterodimers.

The enzyme catalyses aldehydo-D-ribose 5-phosphate + D-glyceraldehyde 3-phosphate + L-glutamine = pyridoxal 5'-phosphate + L-glutamate + phosphate + 3 H2O + H(+). It participates in cofactor biosynthesis; pyridoxal 5'-phosphate biosynthesis. Functionally, catalyzes the formation of pyridoxal 5'-phosphate from ribose 5-phosphate (RBP), glyceraldehyde 3-phosphate (G3P) and ammonia. The ammonia is provided by the PdxT subunit. Can also use ribulose 5-phosphate and dihydroxyacetone phosphate as substrates, resulting from enzyme-catalyzed isomerization of RBP and G3P, respectively. This chain is Pyridoxal 5'-phosphate synthase subunit PdxS, found in Thermotoga petrophila (strain ATCC BAA-488 / DSM 13995 / JCM 10881 / RKU-1).